The chain runs to 247 residues: 5'-nucleotidase SurE (247 aa).

Asp-8, Asp-9, Ser-39, and Asn-91 together coordinate a divalent metal cation.

Belongs to the SurE nucleotidase family. It depends on a divalent metal cation as a cofactor.

The protein resides in the cytoplasm. It catalyses the reaction a ribonucleoside 5'-phosphate + H2O = a ribonucleoside + phosphate. Its function is as follows. Nucleotidase that shows phosphatase activity on nucleoside 5'-monophosphates. The protein is 5'-nucleotidase SurE of Nitrosomonas eutropha (strain DSM 101675 / C91 / Nm57).